The chain runs to 433 residues: Histidine--tRNA ligase (433 aa).

It belongs to the class-II aminoacyl-tRNA synthetase family. Homodimer.

It localises to the cytoplasm. The enzyme catalyses tRNA(His) + L-histidine + ATP = L-histidyl-tRNA(His) + AMP + diphosphate + H(+). This Blochmanniella floridana protein is Histidine--tRNA ligase.